The sequence spans 498 residues: Glycerol kinase (498 aa).

Thr11 contacts ADP. 3 residues coordinate ATP: Thr11, Ser12, and Ser13. Thr11 contacts sn-glycerol 3-phosphate. Arg15 is an ADP binding site. Residues Arg81, Glu82, Tyr133, and Asp242 each coordinate sn-glycerol 3-phosphate. Positions 81, 82, 133, 242, and 243 each coordinate glycerol. ADP-binding residues include Thr264 and Gly307. Positions 264, 307, 311, and 408 each coordinate ATP. 2 residues coordinate ADP: Gly408 and Asn412.

The protein belongs to the FGGY kinase family.

The catalysed reaction is glycerol + ATP = sn-glycerol 3-phosphate + ADP + H(+). It participates in polyol metabolism; glycerol degradation via glycerol kinase pathway; sn-glycerol 3-phosphate from glycerol: step 1/1. Its activity is regulated as follows. Inhibited by fructose 1,6-bisphosphate (FBP). Functionally, key enzyme in the regulation of glycerol uptake and metabolism. Catalyzes the phosphorylation of glycerol to yield sn-glycerol 3-phosphate. The protein is Glycerol kinase of Ralstonia pickettii (strain 12J).